The sequence spans 459 residues: Protoheme IX farnesyltransferase (459 aa).

Residues 1-184 are unknown; it reads MSRNTATQFV…AYVQLMKPRL (184 aa). The next 12 membrane-spanning stretches (helical) occupy residues 9 to 29, 66 to 86, 93 to 113, 123 to 143, 184 to 204, 211 to 231, 262 to 282, 284 to 304, 325 to 345, 382 to 402, 403 to 423, and 438 to 458; these read FVAV…LGAT, AAAL…RTGA, AVTL…YTAM, VHLT…AWTL, LMWL…SQLG, AATV…SGTF, LAFG…VNLL, AVLG…VLKP, WVAV…VIFL, HIVY…ELTG, LGPL…YFAI, and FHAS…DTMV. The tract at residues 185–459 is protoheme IX prenyltransferase; it reads MWLLCLVAGA…VAVVLDTMVV (275 aa).

The protein in the C-terminal section; belongs to the UbiA prenyltransferase family. Protoheme IX farnesyltransferase subfamily.

The protein localises to the cell membrane. The enzyme catalyses heme b + (2E,6E)-farnesyl diphosphate + H2O = Fe(II)-heme o + diphosphate. Its pathway is porphyrin-containing compound metabolism; heme O biosynthesis; heme O from protoheme: step 1/1. Functionally, converts heme B (protoheme IX) to heme O by substitution of the vinyl group on carbon 2 of heme B porphyrin ring with a hydroxyethyl farnesyl side group. The sequence is that of Protoheme IX farnesyltransferase (ctaB) from Halobacterium salinarum (strain ATCC 29341 / DSM 671 / R1).